The sequence spans 406 residues: Phosphopentomutase (406 aa).

Mn(2+)-binding residues include Asp10, Asp305, His310, Asp346, His347, and His358.

This sequence belongs to the phosphopentomutase family. The cofactor is Mn(2+).

It is found in the cytoplasm. It catalyses the reaction 2-deoxy-alpha-D-ribose 1-phosphate = 2-deoxy-D-ribose 5-phosphate. It carries out the reaction alpha-D-ribose 1-phosphate = D-ribose 5-phosphate. Its pathway is carbohydrate degradation; 2-deoxy-D-ribose 1-phosphate degradation; D-glyceraldehyde 3-phosphate and acetaldehyde from 2-deoxy-alpha-D-ribose 1-phosphate: step 1/2. Isomerase that catalyzes the conversion of deoxy-ribose 1-phosphate (dRib-1-P) and ribose 1-phosphate (Rib-1-P) to deoxy-ribose 5-phosphate (dRib-5-P) and ribose 5-phosphate (Rib-5-P), respectively. The chain is Phosphopentomutase from Rhizobium etli (strain ATCC 51251 / DSM 11541 / JCM 21823 / NBRC 15573 / CFN 42).